We begin with the raw amino-acid sequence, 676 residues long: Electrogenic aspartate/glutamate antiporter SLC25A12, mitochondrial (676 aa).

At A2 the chain carries N-acetylalanine. Residues 2–293 (AVKVHTTKRG…TLADIERIAP (292 aa)) are regulatory N-terminal domain. Residues 2–328 (AVKVHTTKRG…WLQIAESAYR (327 aa)) lie on the Mitochondrial intermembrane side of the membrane. Residues D65, T67, D69, L71, and E76 each coordinate Ca(2+). EF-hand domains are found at residues 65-76 (DQTKDGLISYQE), 86-121 (APDS…TIIH), 125-155 (PFNW…QFLQ), and 157-192 (LQLE…IRSH). The interval 294-309 (LAEGALPYNLAELQRQ) is linker loop domain. The carrier domain stretch occupies residues 319 to 611 (WLQIAESAYR…RWFYIDFGGL (293 aa)). Solcar repeat units follow at residues 323-415 (AESA…VRDK), 423-507 (IPLP…CKLL), and 515-603 (VGGI…LQRW). The helical transmembrane segment at 329 to 346 (FTLGSVAGAVGATAVYPI) threads the bilayer. At 347 to 389 (DLVKTRMQNQRGTGSVVGELMYKNSFDCFKKVLRYEGFFGLYR) the chain is on the mitochondrial matrix side. The helical transmembrane segment at 390–409 (GLIPQLIGVAPEKAIKLTVN) threads the bilayer. The Mitochondrial intermembrane portion of the chain corresponds to 410-432 (DFVRDKFTRRDGSIPLPAEILAG). A helical membrane pass occupies residues 433–446 (GCAGGSQVIFTNPL). The Mitochondrial matrix portion of the chain corresponds to 447–481 (EIVKIRLQVAGEITTGPRVSALNVLQDLGLFGLYK). The chain crosses the membrane as a helical span at residues 482 to 501 (GAKACFLRDIPFSAIYFPVY). Topologically, residues 502-520 (AHCKLLLADENGHVGGINL) are mitochondrial intermembrane. The chain crosses the membrane as a helical span at residues 521–538 (LTAGAMAGVPAASLVTPA). The Mitochondrial matrix segment spans residues 539 to 577 (DVIKTRLQVAARAGQTTYSGVIDCFRKILREEGPSAFWK). Residues 578–597 (GTAARVFRSSPQFGVTLVTY) form a helical membrane-spanning segment. At 598–676 (ELLQRWFYID…AQPKVAAAAQ (79 aa)) the chain is on the mitochondrial intermembrane side. The segment at 612 to 674 (KPSGSEPTPK…AAAQPKVAAA (63 aa)) is C-terminal domain.

Belongs to the mitochondrial carrier (TC 2.A.29) family. As to quaternary structure, homodimer (via N-terminus).

It is found in the mitochondrion inner membrane. The catalysed reaction is L-aspartate(in) + L-glutamate(out) + H(+)(out) = L-aspartate(out) + L-glutamate(in) + H(+)(in). The enzyme catalyses 3-sulfino-L-alanine(out) + L-glutamate(in) + H(+)(in) = 3-sulfino-L-alanine(in) + L-glutamate(out) + H(+)(out). It carries out the reaction 3-sulfino-L-alanine(out) + L-aspartate(in) = 3-sulfino-L-alanine(in) + L-aspartate(out). L-aspartate and 3-sulfino-L-alanine uptake are both inhibited by glisoxepide. In terms of biological role, mitochondrial electrogenic aspartate/glutamate antiporter that favors efflux of aspartate and entry of glutamate and proton within the mitochondria as part of the malate-aspartate shuttle. Also mediates the uptake of L-cysteinesulfinate (3-sulfino-L-alanine) by mitochondria in exchange of L-glutamate and proton. Can also exchange L-cysteinesulfinate with aspartate in their anionic form without any proton translocation. Lacks transport activity towards L-glutamine or gamma-aminobutyric acid (GABA). The sequence is that of Electrogenic aspartate/glutamate antiporter SLC25A12, mitochondrial from Rattus norvegicus (Rat).